The following is a 371-amino-acid chain: Cell division control protein 3 (371 aa).

The Septin-type G domain maps to 22–307 (AGIDFNIMTV…DEYKTREIGL (286 aa)). Positions 32–39 (GSNGLGKS) are G1 motif. GTP is bound by residues 32–39 (GSNGLGKS), Gly116, 195–203 (KSDLLSDSE), and Arg257. Positions 113 to 116 (EVDG) are G3 motif. Positions 194 to 197 (GKSD) are G4 motif.

The protein belongs to the TRAFAC class TrmE-Era-EngA-EngB-Septin-like GTPase superfamily. Septin GTPase family. As to quaternary structure, component of the septin complex.

Functionally, septins are GTPases involved in cytokinesis. The septins localize to the site of cleavage and act as a structural scaffold that recruits different components involved in diverse processes at specific stages during the cell cycle. Septins are also involved in cell morphogenesis, chitin deposition, cell cycle regulation, cell compartmentalization and spore wall formation. The protein is Cell division control protein 3 (CDC3) of Encephalitozoon cuniculi (strain GB-M1) (Microsporidian parasite).